A 156-amino-acid polypeptide reads, in one-letter code: Small ribosomal subunit protein uS7 (156 aa).

Belongs to the universal ribosomal protein uS7 family. Part of the 30S ribosomal subunit. Contacts proteins S9 and S11.

Functionally, one of the primary rRNA binding proteins, it binds directly to 16S rRNA where it nucleates assembly of the head domain of the 30S subunit. Is located at the subunit interface close to the decoding center, probably blocks exit of the E-site tRNA. This is Small ribosomal subunit protein uS7 from Clavibacter michiganensis subsp. michiganensis (strain NCPPB 382).